A 127-amino-acid chain; its full sequence is Protein HI_1253 (127 aa).

Transmembrane regions (helical) follow at residues 13–33, 61–81, 82–102, and 107–127; these read VIML…LLVI, LIVS…WWLV, AKFA…SKKV, and SIFF…AYLK.

The protein belongs to the SirB2 family.

It localises to the cell inner membrane. The chain is Protein HI_1253 from Haemophilus influenzae (strain ATCC 51907 / DSM 11121 / KW20 / Rd).